The chain runs to 405 residues: Transposase from transposon Tn916 (405 aa).

In terms of domain architecture, Core-binding (CB) spans 79 to 163 (GKKMTLCQLY…SLKASFYIAI (85 aa)). A Tyr recombinase domain is found at 186–392 (VPKTVLTEEQ…TFDSAMAEMK (207 aa)). Residues Arg225, Lys264, His343, Arg346, and His369 contribute to the active site. Catalysis depends on Tyr379, which acts as the O-(3'-phospho-DNA)-tyrosine intermediate.

It belongs to the 'phage' integrase family.

The chain is Transposase from transposon Tn916 (Int-Tn) from Enterococcus faecalis (Streptococcus faecalis).